Here is a 217-residue protein sequence, read N- to C-terminus: Probable transaldolase (217 aa).

Catalysis depends on Lys83, which acts as the Schiff-base intermediate with substrate.

Belongs to the transaldolase family. Type 3B subfamily.

It is found in the cytoplasm. The enzyme catalyses D-sedoheptulose 7-phosphate + D-glyceraldehyde 3-phosphate = D-erythrose 4-phosphate + beta-D-fructose 6-phosphate. It functions in the pathway carbohydrate degradation; pentose phosphate pathway; D-glyceraldehyde 3-phosphate and beta-D-fructose 6-phosphate from D-ribose 5-phosphate and D-xylulose 5-phosphate (non-oxidative stage): step 2/3. Its function is as follows. Transaldolase is important for the balance of metabolites in the pentose-phosphate pathway. The polypeptide is Probable transaldolase (Sinorhizobium medicae (strain WSM419) (Ensifer medicae)).